Here is a 530-residue protein sequence, read N- to C-terminus: Cation channel sperm-associated protein 2 (530 aa).

Over M1–P108 the chain is Cytoplasmic. The helical transmembrane segment at L109–L131 threads the bilayer. Residues L132–W140 lie on the Extracellular side of the membrane. Residues P141 to L166 form a helical membrane-spanning segment. Residues S167–S175 lie on the Cytoplasmic side of the membrane. The chain crosses the membrane as a helical span at residues A176–T200. Residues G201 to S203 lie on the Extracellular side of the membrane. Residues V204–A222 form a helical membrane-spanning segment. At Q223–K239 the chain is on the cytoplasmic side. A helical transmembrane segment spans residues S240–V262. The Extracellular portion of the chain corresponds to F263–S281. The segment at residues D282–F294 is an intramembrane region (helical; Pore-forming). Residues T295–R314 are Extracellular-facing. The helical transmembrane segment at I315–V341 threads the bilayer. Topologically, residues T342–K530 are cytoplasmic. A disordered region spans residues M378–E458. The span at K429–Y440 shows a compositional bias: basic and acidic residues. Residues S442–E458 show a composition bias toward low complexity.

Belongs to the cation channel sperm-associated (TC 1.A.1.19) family. Component of the CatSper complex or CatSpermasome composed of the core pore-forming members CATSPER1, CATSPER2, CATSPER3 and CATSPER4 as well as auxiliary members CATSPERB, CATSPERG, CATSPERD, CATSPERE, CATSPERZ, C2CD6/CATSPERT, TMEM249, TMEM262 and EFCAB9. HSPA1 may be an additional auxiliary complex member. The core complex members CATSPER1, CATSPER2, CATSPER3 and CATSPER4 form a heterotetrameric channel. The auxiliary CATSPERB, CATSPERG, CATSPERD and CATSPERE subunits form a pavilion-like structure over the pore which stabilizes the complex through interactions with CATSPER4, CATSPER3, CATSPER1 and CATSPER2 respectively. TMEM262/CATSPERH interacts with CATSPERB, further stabilizing the complex. C2CD6/CATSPERT interacts at least with CATSPERD and is required for targeting the CatSper complex in the flagellar membrane. Interacts with Ca(v)3.3/CACNA1I, leading to suppression of T-type calcium channel activity. As to expression, testis-specific.

It localises to the cell projection. The protein localises to the cilium. Its subcellular location is the flagellum membrane. It catalyses the reaction Ca(2+)(in) = Ca(2+)(out). The CatSper calcium channel is indirectly activated by extracellular progesterone and prostaglandins following the sequence: progesterone &gt; PGF1-alpha = PGE1 &gt; PGA1 &gt; PGE2 &gt;&gt; PGD2. The CatSper calcium channel is directly inhibited by endocannabinoid 2-arachidonoylglycerol (2AG). Indirect activation by progesterone takes place via the following mechanism: progesterone binds and activates the acylglycerol lipase ABHD2, which in turn mediates hydrolysis of 2AG inhibitor, relieving inhibition of the CatSper channel. The primary effect of progesterone activation is to shift voltage dependence towards more physiological, negative membrane potentials; it is not mediated by metabotropic receptors and second messengers. Sperm capacitation enhances the effect of progesterone by providing additional negative shift. Also activated by the elevation of intracellular pH. Its function is as follows. Pore-forming subunit of the CatSper complex, a sperm-specific voltage-gated calcium channel, that plays a central role in calcium-dependent physiological responses essential for successful fertilization, such as sperm hyperactivation, acrosome reaction and chemotaxis towards the oocyte. The polypeptide is Cation channel sperm-associated protein 2 (CATSPER2) (Homo sapiens (Human)).